The following is a 423-amino-acid chain: Sorting nexin-4 (423 aa).

Residues 1–21 (MTDKGKNDLTSKAKDKARGNP) are compositionally biased toward basic and acidic residues. Residues 1-25 (MTDKGKNDLTSKAKDKARGNPEKPP) form a disordered region. The region spanning 29–157 (EIIVSDPQKR…TFLVSKDWES (129 aa)) is the PX domain. 4 residues coordinate a 1,2-diacyl-sn-glycero-3-phospho-(1D-myo-inositol-3-phosphate): Arg-78, Ser-80, Lys-104, and Arg-123. Coiled-coil stretches lie at residues 217–252 (KKNDSMSEDYTKLGSNLQELQELVTGENEELAAKLK) and 346–381 (SRREKINKLEGKITSLTGELENAKKVADGFEQECLK).

It belongs to the sorting nexin family. Forms a complex with ATG20 and ATG17. Binds also to SNC1 and SNX41.

The protein localises to the cytoplasm. It localises to the cytosol. The protein resides in the preautophagosomal structure membrane. It is found in the endosome membrane. Its function is as follows. Sorting nexin, involved in the separation or division of vacuoles throughout the entire life cycle of the cells. Involved in retrieval of late-Golgi SNAREs from post-Golgi endosomes to the trans-Golgi network, for cytoplasm to vacuole transport (Cvt), and autophagy of large cargos including mitophagy, pexophagy and glycophagy. Involved in proper sorting of the v-SNARE protein SNC1. The polypeptide is Sorting nexin-4 (Saccharomyces cerevisiae (strain ATCC 204508 / S288c) (Baker's yeast)).